A 284-amino-acid chain; its full sequence is ATP phosphoribosyltransferase (284 aa).

The protein belongs to the ATP phosphoribosyltransferase family. Long subfamily. The cofactor is Mg(2+).

The protein localises to the cytoplasm. The catalysed reaction is 1-(5-phospho-beta-D-ribosyl)-ATP + diphosphate = 5-phospho-alpha-D-ribose 1-diphosphate + ATP. It participates in amino-acid biosynthesis; L-histidine biosynthesis; L-histidine from 5-phospho-alpha-D-ribose 1-diphosphate: step 1/9. Feedback inhibited by histidine. In terms of biological role, catalyzes the condensation of ATP and 5-phosphoribose 1-diphosphate to form N'-(5'-phosphoribosyl)-ATP (PR-ATP). Has a crucial role in the pathway because the rate of histidine biosynthesis seems to be controlled primarily by regulation of HisG enzymatic activity. The sequence is that of ATP phosphoribosyltransferase from Methanococcoides burtonii (strain DSM 6242 / NBRC 107633 / OCM 468 / ACE-M).